Here is a 910-residue protein sequence, read N- to C-terminus: DNA mismatch repair protein MutS (910 aa).

The segment covering 1–11 has biased composition (basic and acidic residues); it reads MEAKVEEKEPE. The tract at residues 1 to 21 is disordered; it reads MEAKVEEKEPEPVENAGPDAP. 658–665 lines the ATP pocket; sequence GPNMGGKS.

The protein belongs to the DNA mismatch repair MutS family.

In terms of biological role, this protein is involved in the repair of mismatches in DNA. It is possible that it carries out the mismatch recognition step. This protein has a weak ATPase activity. In Brucella abortus (strain 2308), this protein is DNA mismatch repair protein MutS.